The following is a 71-amino-acid chain: Protein translocase subunit SecE (71 aa).

Residues 43–63 traverse the membrane as a helical segment; the sequence is VAGVGILAVGAIGFIIYVLLT.

This sequence belongs to the SecE/SEC61-gamma family. In terms of assembly, component of the Sec protein translocase complex. Heterotrimer consisting of SecY (alpha), SecG (beta) and SecE (gamma) subunits. The heterotrimers can form oligomers, although 1 heterotrimer is thought to be able to translocate proteins. Interacts with the ribosome. May interact with SecDF, and other proteins may be involved.

The protein localises to the cell membrane. Its function is as follows. Essential subunit of the Sec protein translocation channel SecYEG. Clamps together the 2 halves of SecY. May contact the channel plug during translocation. The polypeptide is Protein translocase subunit SecE (Methanosarcina barkeri (strain Fusaro / DSM 804)).